The sequence spans 1096 residues: Protein transport protein SEC24 B (1096 aa).

The interval 1–315 is disordered; the sequence is MAAPVPPGAY…SAPGTPGSIY (315 aa). Low complexity predominate over residues 12–23; that stretch reads PNNNQQNSGGPP. Over residues 27–45 the composition is skewed to polar residues; that stretch reads PGSQGNPNSLAANMQNLNI. The segment covering 47-64 has biased composition (pro residues); it reads RPPPPMPGSGPRPSPPFG. Over residues 65 to 78 the composition is skewed to low complexity; that stretch reads QSPQSFPQQQQQQP. Residues 79-92 are compositionally biased toward pro residues; it reads RPSPMARPGPPPPA. The span at 93–107 shows a compositional bias: low complexity; the sequence is AMARPGGPPQVSQPG. The span at 108–122 shows a compositional bias: pro residues; it reads GFPPVGRPVAPPSNQ. Residues 140–149 are compositionally biased toward low complexity; sequence SFPQPGGFPA. 4 stretches are compositionally biased toward pro residues: residues 150 to 160, 171 to 186, 246 to 258, and 287 to 303; these read SGPPGGVPSGP, SPPPMGPGMSMPPPSG, MAPPPPYGQPPNA, and GRPPMPGGFPYGAPPQQ. Cys433, Cys436, Cys455, and Cys458 together coordinate Zn(2+). The tract at residues 433–458 is zinc finger-like; that stretch reads CSRCKGYVNPFMKFIDQGRKFICNLC.

The protein belongs to the SEC23/SEC24 family. SEC24 subfamily. As to quaternary structure, component of the coat protein complex II (COPII), composed of at least five proteins: the Sec23/24 complex, the Sec13/31 complex and Sar1. In terms of tissue distribution, mainly expressed in pollen, roots, stems, petioles and hypocotyls, and, to a lower extent, in leaves and cotyledons.

The protein localises to the cytoplasmic vesicle. It localises to the COPII-coated vesicle membrane. The protein resides in the endoplasmic reticulum membrane. It is found in the golgi apparatus membrane. Functionally, component of the coat protein complex II (COPII), that covers ER-derived vesicles involved in transport from the endoplasmic reticulum to the Golgi apparatus. COPII is composed of at least five proteins: the SEC23/24 complex, the SEC13/31 complex, and the protein SAR1. Acts in the cytoplasm to promote the transport of secretory, plasma membrane, and vacuolar proteins from the endoplasmic reticulum to the Golgi complex. This chain is Protein transport protein SEC24 B, found in Arabidopsis thaliana (Mouse-ear cress).